We begin with the raw amino-acid sequence, 257 residues long: DNA repair protein RecO (257 aa).

It belongs to the RecO family.

Involved in DNA repair and RecF pathway recombination. The protein is DNA repair protein RecO of Clostridium kluyveri (strain ATCC 8527 / DSM 555 / NBRC 12016 / NCIMB 10680 / K1).